The sequence spans 583 residues: Tetratricopeptide repeat protein 39C (583 aa).

Residues 1–22 form a disordered region; sequence MAGSEQQRPRRRDDGDSDAAAA. TPR repeat units follow at residues 315–348, 353–386, and 485–518; these read SLFM…AVDQ, HVCL…SRWS, and GLKY…ELCR.

Belongs to the TTC39 family.

The chain is Tetratricopeptide repeat protein 39C (TTC39C) from Homo sapiens (Human).